Consider the following 287-residue polypeptide: uncharacterized protein (287 aa).

GTP is bound by residues 43–50 (GKTGVGKS), 90–93 (DLPG), and 156–159 (DKAE). One can recognise a G domain in the interval 48–138 (GKSSLCNALF…LTVDEHFYHQ (91 aa)).

To E.coli YfjP and YeeP.

This is an uncharacterized protein from Escherichia coli (strain K12).